We begin with the raw amino-acid sequence, 165 residues long: MEQGGSGYRIEIAPNNRAKCKGSLCGRSKILAGTVRFGTFVDSGRFQSWAWKHWGCVTPRMLKNIKNRLGEDDIVNSLDGITALSQEWIDKVVDAINEGHVSESDERESRKLGEKMNVNSQKLKTSSPPKVVRKNKRHHTTVKSVLSDSDLDAEFTDGSEAYEDD.

The segment at 8–100 (YRIEIAPNNR…KVVDAINEGH (93 aa)) adopts a PARP-type; degenerate zinc-finger fold. Residues 100–114 (HVSESDERESRKLGE) are compositionally biased toward basic and acidic residues. A disordered region spans residues 100 to 165 (HVSESDERES…TDGSEAYEDD (66 aa)). Residues 117 to 128 (NVNSQKLKTSSP) show a composition bias toward polar residues. Residues 131-141 (VVRKNKRHHTT) are compositionally biased toward basic residues. The span at 149 to 165 (SDLDAEFTDGSEAYEDD) shows a compositional bias: acidic residues.

The protein resides in the cytoplasm. It is found in the nucleus. The sequence is that of PARP-type zinc finger-containing protein C13F5.07c from Schizosaccharomyces pombe (strain 972 / ATCC 24843) (Fission yeast).